We begin with the raw amino-acid sequence, 245 residues long: 1-(5-phosphoribosyl)-5-[(5-phosphoribosylamino)methylideneamino] imidazole-4-carboxamide isomerase (245 aa).

Asp-7 (proton acceptor) is an active-site residue. Catalysis depends on Asp-129, which acts as the Proton donor.

Belongs to the HisA/HisF family.

It is found in the cytoplasm. It carries out the reaction 1-(5-phospho-beta-D-ribosyl)-5-[(5-phospho-beta-D-ribosylamino)methylideneamino]imidazole-4-carboxamide = 5-[(5-phospho-1-deoxy-D-ribulos-1-ylimino)methylamino]-1-(5-phospho-beta-D-ribosyl)imidazole-4-carboxamide. It participates in amino-acid biosynthesis; L-histidine biosynthesis; L-histidine from 5-phospho-alpha-D-ribose 1-diphosphate: step 4/9. This Idiomarina loihiensis (strain ATCC BAA-735 / DSM 15497 / L2-TR) protein is 1-(5-phosphoribosyl)-5-[(5-phosphoribosylamino)methylideneamino] imidazole-4-carboxamide isomerase.